The sequence spans 142 residues: Hemoglobin subunit alpha-A (142 aa).

A Globin domain is found at 2 to 142 (VLSAADKNNV…VGTVLTAKYR (141 aa)). Histidine 59 serves as a coordination point for O2. Histidine 88 contacts heme b.

It belongs to the globin family. In terms of assembly, heterotetramer of two alpha chains and two beta chains. As to expression, red blood cells.

Involved in oxygen transport from the lung to the various peripheral tissues. This is Hemoglobin subunit alpha-A (HBAA) from Gallus gallus (Chicken).